The sequence spans 424 residues: Glutamate-1-semialdehyde 2,1-aminomutase (424 aa).

K260 is subject to N6-(pyridoxal phosphate)lysine.

It belongs to the class-III pyridoxal-phosphate-dependent aminotransferase family. HemL subfamily. Requires pyridoxal 5'-phosphate as cofactor.

The protein localises to the cytoplasm. It carries out the reaction (S)-4-amino-5-oxopentanoate = 5-aminolevulinate. It participates in porphyrin-containing compound metabolism; protoporphyrin-IX biosynthesis; 5-aminolevulinate from L-glutamyl-tRNA(Glu): step 2/2. The sequence is that of Glutamate-1-semialdehyde 2,1-aminomutase from Nitrosopumilus maritimus (strain SCM1).